The primary structure comprises 203 residues: Meiotically up-regulated protein PB17E12.09 (203 aa).

A coiled-coil region spans residues 92-177 (CNRKIEGYIK…KEMQLYMTKI (86 aa)).

The protein localises to the cytoplasm. Has a role in meiosis and sporulation. The sequence is that of Meiotically up-regulated protein PB17E12.09 from Schizosaccharomyces pombe (strain 972 / ATCC 24843) (Fission yeast).